Consider the following 497-residue polypeptide: Probable cytosol aminopeptidase (497 aa).

Mn(2+) contacts are provided by lysine 263 and aspartate 268. Lysine 275 is an active-site residue. Mn(2+) contacts are provided by aspartate 286, aspartate 345, and glutamate 347. Arginine 349 is an active-site residue.

This sequence belongs to the peptidase M17 family. Mn(2+) serves as cofactor.

It localises to the cytoplasm. It catalyses the reaction Release of an N-terminal amino acid, Xaa-|-Yaa-, in which Xaa is preferably Leu, but may be other amino acids including Pro although not Arg or Lys, and Yaa may be Pro. Amino acid amides and methyl esters are also readily hydrolyzed, but rates on arylamides are exceedingly low.. The enzyme catalyses Release of an N-terminal amino acid, preferentially leucine, but not glutamic or aspartic acids.. Its function is as follows. Presumably involved in the processing and regular turnover of intracellular proteins. Catalyzes the removal of unsubstituted N-terminal amino acids from various peptides. In Sinorhizobium medicae (strain WSM419) (Ensifer medicae), this protein is Probable cytosol aminopeptidase.